A 38-amino-acid polypeptide reads, in one-letter code: Photosystem I reaction center subunit IX (38 aa).

Residues 4 to 24 (FLTAAPVVAAIWFTATAGILI) traverse the membrane as a helical segment.

Belongs to the PsaJ family.

The protein resides in the cellular thylakoid membrane. Its function is as follows. May help in the organization of the PsaE and PsaF subunits. The sequence is that of Photosystem I reaction center subunit IX from Synechococcus sp. (strain CC9605).